The primary structure comprises 105 residues: Heat shock protein HspQ (105 aa).

A disordered region spans residues 74-105 (SSETQDEHPEQPSMDELARTIRKQLQAPRLRN).

The protein belongs to the HspQ family.

Its subcellular location is the cytoplasm. Involved in the degradation of certain denaturated proteins, including DnaA, during heat shock stress. In Citrobacter koseri (strain ATCC BAA-895 / CDC 4225-83 / SGSC4696), this protein is Heat shock protein HspQ.